The chain runs to 143 residues: MFMGEYTHTIDDKGRLIIPAKFRSQLGDDFIITRGLDHCLYGYPLIEWQAVQQRLASLPSTNANARKLVRYFYSAACECQFDKQGRVNLPANLMQHAYLERDCVVIGVASHFEIWDAERWASYQDAAASDFDQLAAGFDGLSF.

2 consecutive SpoVT-AbrB domains span residues 5-47 and 76-119; these read EYTH…PLIE and ACEC…DAER.

Belongs to the MraZ family. As to quaternary structure, forms oligomers.

It is found in the cytoplasm. The protein localises to the nucleoid. This Limosilactobacillus fermentum (strain NBRC 3956 / LMG 18251) (Lactobacillus fermentum) protein is Transcriptional regulator MraZ.